Consider the following 100-residue polypeptide: Trp operon repressor homolog (100 aa).

Residues 59–82 (QRQISQMLGVGIATITRGSNELKS) mediate DNA binding. Residues 78-93 (NELKSKSDTDKDKLKT) show a composition bias toward basic and acidic residues. Residues 78-100 (NELKSKSDTDKDKLKTLLEQGAQ) form a disordered region.

The protein belongs to the TrpR family. In terms of assembly, homodimer.

It is found in the cytoplasm. Its function is as follows. This protein is an aporepressor. When complexed with L-tryptophan it binds the operator region of the trp operon and prevents the initiation of transcription. This is Trp operon repressor homolog from Vibrio campbellii (strain ATCC BAA-1116).